A 228-amino-acid chain; its full sequence is Ankyrin repeat domain-containing protein 46 (228 aa).

4 ANK repeats span residues 11 to 40, 44 to 73, 77 to 103, and 107 to 138; these read QTNV…DPNI, RGRT…DLLA, QGNT…KIDI, and QGAT…EVKG. A helical membrane pass occupies residues 195 to 215; sequence VLLLIFVIALLSLGIAYYVSG.

Its subcellular location is the membrane. This Bos taurus (Bovine) protein is Ankyrin repeat domain-containing protein 46 (ANKRD46).